The chain runs to 440 residues: Chromosomal replication initiator protein DnaA (440 aa).

Residues 1–69 are domain I, interacts with DnaA modulators; that stretch reads MKERILQEIK…VKVVLGNDAT (69 aa). Positions 69–96 are domain II; sequence TFEITYEAFEPHSSYSEPLVKKRAVLLT. The interval 97–313 is domain III, AAA+ region; that stretch reads PLNPDYTFEN…GAIIKLLVYK (217 aa). Glycine 140, glycine 142, lysine 143, and threonine 144 together coordinate ATP. The interval 314–440 is domain IV, binds dsDNA; that stretch reads ETTGKEVDLR…GEISKRALSG (127 aa).

It belongs to the DnaA family. Oligomerizes as a right-handed, spiral filament on DNA at oriC.

The protein resides in the cytoplasm. Plays an essential role in the initiation and regulation of chromosomal replication. ATP-DnaA binds to the origin of replication (oriC) to initiate formation of the DNA replication initiation complex once per cell cycle. Binds the DnaA box (a 9 base pair repeat at the origin) and separates the double-stranded (ds)DNA. Forms a right-handed helical filament on oriC DNA; dsDNA binds to the exterior of the filament while single-stranded (ss)DNA is stabiized in the filament's interior. The ATP-DnaA-oriC complex binds and stabilizes one strand of the AT-rich DNA unwinding element (DUE), permitting loading of DNA polymerase. After initiation quickly degrades to an ADP-DnaA complex that is not apt for DNA replication. Binds acidic phospholipids. This Thermotoga petrophila (strain ATCC BAA-488 / DSM 13995 / JCM 10881 / RKU-1) protein is Chromosomal replication initiator protein DnaA.